The chain runs to 187 residues: MATTADFKNGLVLKLDNKLQQIVEFQHVKPGKGPAFVRTKLKDVVSGKVVDKTFNAGVKVETATVDRRDMTYLYNDGTDYVVMDDKNYEQIPLSPELMGDGARFLLENMPVQVSFYEDQPLFVELPVSVELKVKHTDPGLQGDRSTGGTKPATLETGAEVQVPLFIETGNVLKIDTRDGSYLSRVNN.

This sequence belongs to the elongation factor P family.

It is found in the cytoplasm. It functions in the pathway protein biosynthesis; polypeptide chain elongation. Involved in peptide bond synthesis. Stimulates efficient translation and peptide-bond synthesis on native or reconstituted 70S ribosomes in vitro. Probably functions indirectly by altering the affinity of the ribosome for aminoacyl-tRNA, thus increasing their reactivity as acceptors for peptidyl transferase. The sequence is that of Elongation factor P from Corynebacterium kroppenstedtii (strain DSM 44385 / JCM 11950 / CIP 105744 / CCUG 35717).